The chain runs to 458 residues: Ribosomal protein uS12 methylthiotransferase RimO (458 aa).

Residues 26–136 form the MTTase N-terminal domain; that stretch reads PRIGMVSLGC…VLDAVHGAVP (111 aa). [4Fe-4S] cluster-binding residues include cysteine 35, cysteine 71, cysteine 100, cysteine 167, cysteine 171, and cysteine 174. A Radical SAM core domain is found at 153–389; that stretch reads LTPRHYAYLK…MEKAQAISEA (237 aa). In terms of domain architecture, TRAM spans 392-458; it reads QAKVGRTMQV…SEYDLWGKLT (67 aa).

Belongs to the methylthiotransferase family. RimO subfamily. It depends on [4Fe-4S] cluster as a cofactor.

It is found in the cytoplasm. It catalyses the reaction L-aspartate(89)-[ribosomal protein uS12]-hydrogen + (sulfur carrier)-SH + AH2 + 2 S-adenosyl-L-methionine = 3-methylsulfanyl-L-aspartate(89)-[ribosomal protein uS12]-hydrogen + (sulfur carrier)-H + 5'-deoxyadenosine + L-methionine + A + S-adenosyl-L-homocysteine + 2 H(+). Its function is as follows. Catalyzes the methylthiolation of an aspartic acid residue of ribosomal protein uS12. The chain is Ribosomal protein uS12 methylthiotransferase RimO from Jannaschia sp. (strain CCS1).